The following is a 330-amino-acid chain: Malate dehydrogenase (330 aa).

13–19 is a binding site for NAD(+); sequence GAAGQIG. Residues Arg94 and Arg100 each contribute to the substrate site. Residues Asn107, Gln114, and 131–133 contribute to the NAD(+) site; that span reads VGN. Substrate-binding residues include Asn133 and Arg164. The active-site Proton acceptor is the His189.

This sequence belongs to the LDH/MDH superfamily. MDH type 2 family.

It catalyses the reaction (S)-malate + NAD(+) = oxaloacetate + NADH + H(+). Functionally, catalyzes the reversible oxidation of malate to oxaloacetate. The chain is Malate dehydrogenase from Deinococcus radiodurans (strain ATCC 13939 / DSM 20539 / JCM 16871 / CCUG 27074 / LMG 4051 / NBRC 15346 / NCIMB 9279 / VKM B-1422 / R1).